Consider the following 376-residue polypeptide: tRNA(Met) cytidine acetate ligase (376 aa).

ATP is bound by residues 7 to 20, Gly-102, Asn-160, and Arg-181; that span reads IAEY…HYYQ.

Belongs to the TmcAL family.

The protein localises to the cytoplasm. The catalysed reaction is cytidine(34) in elongator tRNA(Met) + acetate + ATP = N(4)-acetylcytidine(34) in elongator tRNA(Met) + AMP + diphosphate. In terms of biological role, catalyzes the formation of N(4)-acetylcytidine (ac(4)C) at the wobble position of elongator tRNA(Met), using acetate and ATP as substrates. First activates an acetate ion to form acetyladenylate (Ac-AMP) and then transfers the acetyl group to tRNA to form ac(4)C34. The polypeptide is tRNA(Met) cytidine acetate ligase (Exiguobacterium sp. (strain ATCC BAA-1283 / AT1b)).